Consider the following 93-residue polypeptide: Cobalt transport protein CbiN (93 aa).

2 helical membrane-spanning segments follow: residues 5–25 (LMLL…NHGG) and 63–83 (LLFT…LGYC).

It belongs to the CbiN family. In terms of assembly, forms an energy-coupling factor (ECF) transporter complex composed of an ATP-binding protein (A component, CbiO), a transmembrane protein (T component, CbiQ) and 2 possible substrate-capture proteins (S components, CbiM and CbiN) of unknown stoichimetry.

The protein resides in the cell inner membrane. It functions in the pathway cofactor biosynthesis; adenosylcobalamin biosynthesis. Part of the energy-coupling factor (ECF) transporter complex CbiMNOQ involved in cobalt import. The polypeptide is Cobalt transport protein CbiN (Salmonella choleraesuis (strain SC-B67)).